The chain runs to 358 residues: tRNA-specific 2-thiouridylase MnmA (358 aa).

Residues 7–14 (AMSGGVDS) and Leu-33 each bind ATP. Cys-101 serves as the catalytic Nucleophile. Residues Cys-101 and Cys-197 are joined by a disulfide bond. Residue Gly-125 coordinates ATP. Residues 147–149 (KDQ) are interaction with tRNA. Cys-197 serves as the catalytic Cysteine persulfide intermediate.

The protein belongs to the MnmA/TRMU family.

The protein localises to the cytoplasm. The catalysed reaction is S-sulfanyl-L-cysteinyl-[protein] + uridine(34) in tRNA + AH2 + ATP = 2-thiouridine(34) in tRNA + L-cysteinyl-[protein] + A + AMP + diphosphate + H(+). In terms of biological role, catalyzes the 2-thiolation of uridine at the wobble position (U34) of tRNA, leading to the formation of s(2)U34. In Rickettsia prowazekii (strain Madrid E), this protein is tRNA-specific 2-thiouridylase MnmA.